The chain runs to 85 residues: Large ribosomal subunit protein bL27 (85 aa).

The protein belongs to the bacterial ribosomal protein bL27 family.

This Pseudomonas fluorescens (strain SBW25) protein is Large ribosomal subunit protein bL27.